A 475-amino-acid chain; its full sequence is Protein trichome birefringence-like 6 (475 aa).

A helical; Signal-anchor for type II membrane protein membrane pass occupies residues 14-34 (VLAFIITIISSAIVFFTFFSS). A GDS motif motif is present at residues 211-213 (GDS). The short motif at 450-464 (DCSHWCLPGVPDTWN) is the DCXHWCLPGXXDXWN motif element.

Belongs to the PC-esterase family. TBL subfamily.

It localises to the membrane. In terms of biological role, may act as a bridging protein that binds pectin and other cell wall polysaccharides. Probably involved in maintaining esterification of pectins. May be involved in the specific O-acetylation of cell wall polymers. This Arabidopsis thaliana (Mouse-ear cress) protein is Protein trichome birefringence-like 6 (TBL6).